Here is a 261-residue protein sequence, read N- to C-terminus: Acyl-[acyl-carrier-protein]--UDP-N-acetylglucosamine O-acyltransferase (261 aa).

This sequence belongs to the transferase hexapeptide repeat family. LpxA subfamily. In terms of assembly, homotrimer.

It is found in the cytoplasm. It carries out the reaction a (3R)-hydroxyacyl-[ACP] + UDP-N-acetyl-alpha-D-glucosamine = a UDP-3-O-[(3R)-3-hydroxyacyl]-N-acetyl-alpha-D-glucosamine + holo-[ACP]. It functions in the pathway glycolipid biosynthesis; lipid IV(A) biosynthesis; lipid IV(A) from (3R)-3-hydroxytetradecanoyl-[acyl-carrier-protein] and UDP-N-acetyl-alpha-D-glucosamine: step 1/6. Functionally, involved in the biosynthesis of lipid A, a phosphorylated glycolipid that anchors the lipopolysaccharide to the outer membrane of the cell. The sequence is that of Acyl-[acyl-carrier-protein]--UDP-N-acetylglucosamine O-acyltransferase from Trichlorobacter lovleyi (strain ATCC BAA-1151 / DSM 17278 / SZ) (Geobacter lovleyi).